Consider the following 241-residue polypeptide: Aspartate/glutamate leucyltransferase (241 aa).

This sequence belongs to the R-transferase family. Bpt subfamily.

The protein resides in the cytoplasm. It carries out the reaction N-terminal L-glutamyl-[protein] + L-leucyl-tRNA(Leu) = N-terminal L-leucyl-L-glutamyl-[protein] + tRNA(Leu) + H(+). The enzyme catalyses N-terminal L-aspartyl-[protein] + L-leucyl-tRNA(Leu) = N-terminal L-leucyl-L-aspartyl-[protein] + tRNA(Leu) + H(+). Its function is as follows. Functions in the N-end rule pathway of protein degradation where it conjugates Leu from its aminoacyl-tRNA to the N-termini of proteins containing an N-terminal aspartate or glutamate. The protein is Aspartate/glutamate leucyltransferase of Helicobacter hepaticus (strain ATCC 51449 / 3B1).